A 287-amino-acid polypeptide reads, in one-letter code: ATP synthase gamma chain (287 aa).

The protein belongs to the ATPase gamma chain family. F-type ATPases have 2 components, CF(1) - the catalytic core - and CF(0) - the membrane proton channel. CF(1) has five subunits: alpha(3), beta(3), gamma(1), delta(1), epsilon(1). CF(0) has three main subunits: a, b and c.

It localises to the cell inner membrane. Produces ATP from ADP in the presence of a proton gradient across the membrane. The gamma chain is believed to be important in regulating ATPase activity and the flow of protons through the CF(0) complex. In Proteus mirabilis (strain HI4320), this protein is ATP synthase gamma chain.